Consider the following 166-residue polypeptide: Large ribosomal subunit protein uL10 (166 aa).

Belongs to the universal ribosomal protein uL10 family. In terms of assembly, part of the ribosomal stalk of the 50S ribosomal subunit. The N-terminus interacts with L11 and the large rRNA to form the base of the stalk. The C-terminus forms an elongated spine to which L12 dimers bind in a sequential fashion forming a multimeric L10(L12)X complex.

Its function is as follows. Forms part of the ribosomal stalk, playing a central role in the interaction of the ribosome with GTP-bound translation factors. The sequence is that of Large ribosomal subunit protein uL10 from Bacillus mycoides (strain KBAB4) (Bacillus weihenstephanensis).